Consider the following 241-residue polypeptide: Tryptophan synthase alpha chain (241 aa).

Catalysis depends on proton acceptor residues Glu-31 and Asp-42.

It belongs to the TrpA family. In terms of assembly, tetramer of two alpha and two beta chains.

It carries out the reaction (1S,2R)-1-C-(indol-3-yl)glycerol 3-phosphate + L-serine = D-glyceraldehyde 3-phosphate + L-tryptophan + H2O. The protein operates within amino-acid biosynthesis; L-tryptophan biosynthesis; L-tryptophan from chorismate: step 5/5. In terms of biological role, the alpha subunit is responsible for the aldol cleavage of indoleglycerol phosphate to indole and glyceraldehyde 3-phosphate. This Staphylococcus saprophyticus subsp. saprophyticus (strain ATCC 15305 / DSM 20229 / NCIMB 8711 / NCTC 7292 / S-41) protein is Tryptophan synthase alpha chain.